Consider the following 257-residue polypeptide: Phosphonates import ATP-binding protein PhnC (257 aa).

The ABC transporter domain maps to 4–248 (IEFKDVSKVY…VFNHIYGRSI (245 aa)).

The protein belongs to the ABC transporter superfamily. Phosphonates importer (TC 3.A.1.9.1) family. The complex is composed of two ATP-binding proteins (PhnC), two transmembrane proteins (PhnE) and a solute-binding protein (PhnD).

The protein localises to the cell membrane. The catalysed reaction is phosphonate(out) + ATP + H2O = phosphonate(in) + ADP + phosphate + H(+). Part of the ABC transporter complex PhnCDE involved in phosphonates import. Responsible for energy coupling to the transport system. This Staphylococcus epidermidis (strain ATCC 35984 / DSM 28319 / BCRC 17069 / CCUG 31568 / BM 3577 / RP62A) protein is Phosphonates import ATP-binding protein PhnC.